A 184-amino-acid polypeptide reads, in one-letter code: ATP synthase subunit b, chloroplastic (184 aa).

Residues 27–49 (LATNPINLSVVLGVLIFFGKGVL) traverse the membrane as a helical segment.

Belongs to the ATPase B chain family. In terms of assembly, F-type ATPases have 2 components, F(1) - the catalytic core - and F(0) - the membrane proton channel. F(1) has five subunits: alpha(3), beta(3), gamma(1), delta(1), epsilon(1). F(0) has four main subunits: a(1), b(1), b'(1) and c(10-14). The alpha and beta chains form an alternating ring which encloses part of the gamma chain. F(1) is attached to F(0) by a central stalk formed by the gamma and epsilon chains, while a peripheral stalk is formed by the delta, b and b' chains.

The protein localises to the plastid. Its subcellular location is the chloroplast thylakoid membrane. In terms of biological role, f(1)F(0) ATP synthase produces ATP from ADP in the presence of a proton or sodium gradient. F-type ATPases consist of two structural domains, F(1) containing the extramembraneous catalytic core and F(0) containing the membrane proton channel, linked together by a central stalk and a peripheral stalk. During catalysis, ATP synthesis in the catalytic domain of F(1) is coupled via a rotary mechanism of the central stalk subunits to proton translocation. Its function is as follows. Component of the F(0) channel, it forms part of the peripheral stalk, linking F(1) to F(0). The protein is ATP synthase subunit b, chloroplastic of Ceratophyllum demersum (Rigid hornwort).